The sequence spans 232 residues: Flagellar L-ring protein (232 aa).

An N-terminal signal peptide occupies residues 1–21 (MQKNAAHTYAISSLLVLSLTG). The N-palmitoyl cysteine moiety is linked to residue cysteine 22. A lipid anchor (S-diacylglycerol cysteine) is attached at cysteine 22.

This sequence belongs to the FlgH family. As to quaternary structure, the basal body constitutes a major portion of the flagellar organelle and consists of four rings (L,P,S, and M) mounted on a central rod.

Its subcellular location is the cell outer membrane. It localises to the bacterial flagellum basal body. Functionally, assembles around the rod to form the L-ring and probably protects the motor/basal body from shearing forces during rotation. In Shigella boydii serotype 4 (strain Sb227), this protein is Flagellar L-ring protein.